A 327-amino-acid polypeptide reads, in one-letter code: MKTIFSGIQPSGTLTLGNYLGAIQQFVELQNDYNCYFCIVDEHAITVPQDRLELRKNIKSLAALYIASGIDPDSSTLFIQSEVPEHTQLGWMLQSISYVGELERMTQYKDKSQGQEAISSALLTYPSLMAADILLYNTDVVPVGDDQKQHLELARNLAQRFNNRFNDIFTVPEVRIPKVGARIMSLQEPTKKMSKSDTNQKGFISMLDEPKRIEKKIKSAVTDSEGIVKFDKENKPGVSNLLTIYSSCTGESIADLEKKYDGKGYGDFKQGVANAVIDTLRPIQEKYEQLIQSDELDAILDQGRDKASFSAGKTIKKAKKAMGLGRK.

ATP contacts are provided by residues 9 to 11 (QPS) and 17 to 18 (GN). The 'HIGH' region signature appears at 10–18 (PSGTLTLGN). Position 132 (Asp-132) interacts with L-tryptophan. Residues 144–146 (GDD), Ile-183, and 192–196 (KMSKS) each bind ATP. Residues 192 to 196 (KMSKS) carry the 'KMSKS' region motif.

The protein belongs to the class-I aminoacyl-tRNA synthetase family. As to quaternary structure, homodimer.

The protein localises to the cytoplasm. The catalysed reaction is tRNA(Trp) + L-tryptophan + ATP = L-tryptophyl-tRNA(Trp) + AMP + diphosphate + H(+). Its function is as follows. Catalyzes the attachment of tryptophan to tRNA(Trp). The chain is Tryptophan--tRNA ligase from Oceanobacillus iheyensis (strain DSM 14371 / CIP 107618 / JCM 11309 / KCTC 3954 / HTE831).